The chain runs to 362 residues: Probable cysteine protease RDL2 (362 aa).

The signal sequence occupies residues 1–28; the sequence is MAATPIRVIVSALVILSVLLLSSSLGVA. Positions 29-129 are cleaved as a propeptide — activation peptide; that stretch reads TETEIERNET…ERYLYKEGDV (101 aa). N-linked (GlcNAc...) asparagine glycosylation occurs at asparagine 36. Intrachain disulfides connect cysteine 151–cysteine 194 and cysteine 185–cysteine 228. Residue cysteine 154 is part of the active site. Residue asparagine 234 is glycosylated (N-linked (GlcNAc...) asparagine). An intrachain disulfide couples cysteine 287 to cysteine 338. Catalysis depends on residues histidine 293 and asparagine 313.

This sequence belongs to the peptidase C1 family.

In terms of biological role, probable thiol protease. This is Probable cysteine protease RDL2 from Arabidopsis thaliana (Mouse-ear cress).